Here is a 342-residue protein sequence, read N- to C-terminus: Polycomb group RING finger protein 2 (342 aa).

Residues 18–57 form an RING-type zinc finger; the sequence is CALCGGYFIDATTIVECLHSFCKTCIVRYLETNKYCPMCD. Glycyl lysine isopeptide (Lys-Gly) (interchain with G-Cter in SUMO2) cross-links involve residues K51 and K88. The short motif at 81-95 is the Nuclear localization signal element; that stretch reads KLVPGLFKDEMKRRR. T237 is modified (phosphothreonine; by PKA). Positions 237–342 are disordered; sequence TLPTVPTPSE…MTVNGAPCPP (106 aa). A compositionally biased stretch (polar residues) spans 243 to 253; sequence TPSEGTNTSGA. Positions 263-318 are enriched in low complexity; the sequence is APSPATLPATSSSLPSPATPSHGSPSSHGPPATHPTSPTPPSTAAGTTTATNGGTS. Residues 319–328 are compositionally biased toward polar residues; sequence NCLQTPSSTS. The residue at position 334 (T334) is a Phosphothreonine; by PKA.

In terms of assembly, exists as both a monomer and homodimer. Component of a PRC1-like complex. Interacts with CBX8, RING1 and RNF2. Interacts with CBX7. Interacts with PHC2. In terms of processing, phosphorylated. Homodimer formation is regulated by phosphorylation with only unphosphorylated proteins forming homodimers. In terms of tissue distribution, expressed in embryonic stem cells. Expressed in a variety of tumor cells and in neural tissues.

The protein resides in the nucleus. Transcriptional repressor. Binds specifically to the DNA sequence 5'-GACTNGACT-3'. Has tumor suppressor activity. May play a role in control of cell proliferation and/or neural cell development. Regulates proliferation of early T progenitor cells by maintaining expression of HES1. Also plays a role in antero-posterior specification of the axial skeleton and negative regulation of the self-renewal activity of hematopoietic stem cells. Component of a Polycomb group (PcG) multiprotein PRC1-like complex, a complex class required to maintain the transcriptionally repressive state of many genes, including Hox genes, throughout development. PcG PRC1 complex acts via chromatin remodeling and modification of histones; it mediates monoubiquitination of histone H2A 'Lys-119', rendering chromatin heritably changed in its expressibility. Within the PRC1-like complex, regulates RNF2 ubiquitin ligase activity. This chain is Polycomb group RING finger protein 2 (Pcgf2), found in Mus musculus (Mouse).